The following is a 217-amino-acid chain: MNGIHDTGGAHGYGPVYREPNEPVFRYDWEKTVMSLLPALLANANFNLDEFRHSIERMGPAHYLEGTYYEHWLHVFENLLVEKGVLTATEVATGKAASGKTATRVLTPAIVDDSSAPGLLRPGGGFSFFPVGDKVRVLNKNPVGHTRMPRYTRAKWGQWSSTMVCFVTPDTAAHGKGEQPQHVYTVSFTSVELWGQDASSPKDTIRVDLWDDYLEPA.

The protein belongs to the nitrile hydratase subunit beta family. In terms of assembly, heterodimer of an alpha and a beta chain.

The enzyme catalyses an aliphatic primary amide = an aliphatic nitrile + H2O. In terms of biological role, NHase catalyzes the hydration of various nitrile compounds to the corresponding amides. The polypeptide is Nitrile hydratase subunit beta (nthB) (Pseudomonas putida (Arthrobacter siderocapsulatus)).